The primary structure comprises 286 residues: uncharacterized protein (286 aa).

In terms of domain architecture, Radical SAM core spans 36–256 (ENPQHHPSIE…IKGCLLVQLK (221 aa)). Positions 50, 54, and 57 each coordinate [4Fe-4S] cluster.

Requires [4Fe-4S] cluster as cofactor.

This is an uncharacterized protein from Methanocaldococcus jannaschii (strain ATCC 43067 / DSM 2661 / JAL-1 / JCM 10045 / NBRC 100440) (Methanococcus jannaschii).